Reading from the N-terminus, the 2774-residue chain is Teneurin-2 (2774 aa).

One can recognise a Teneurin N-terminal domain in the interval 1-375 (MDVKDRRHRS…KPSKYCSWKC (375 aa)). At 1-379 (MDVKDRRHRS…YCSWKCAALS (379 aa)) the chain is on the cytoplasmic side. A phosphoserine mark is found at S90 and S124. The interval 111 to 271 (TGSDADSDTE…HHHSSANSLN (161 aa)) is disordered. The segment covering 141-155 (SSGLSSRENSALTLT) has biased composition (polar residues). Position 155 is a phosphothreonine (T155). S157 carries the phosphoserine modification. The span at 159-168 (NENKSDDENG) shows a compositional bias: basic and acidic residues. Residues 176–188 (SPSLLPSAQLPSS) are compositionally biased toward low complexity. Polar residues predominate over residues 202 to 211 (DSNTSHQIMD). The span at 229-240 (SGPQQASSSGPP) shows a compositional bias: low complexity. A helical membrane pass occupies residues 380-400 (AIAAALLLAILLAYFIAMHLL). The Extracellular portion of the chain corresponds to 401-2774 (GLNWQLQPAD…FLRQNEMGKR (2374 aa)). N-linked (GlcNAc...) asparagine glycans are attached at residues N443 and N482. EGF-like domains are found at residues 575-603 (DCPR…ADCA), 598-634 (LGAD…AECD), 636-668 (PMNQ…EHCE), 669-701 (EVDC…NCEL), 702-735 (ARVQ…PDCS), 738-766 (VCSV…AACD), 769-797 (VCHP…EHCT), and 808-841 (DGCP…PGCN). Cystine bridges form between C576-C586, C580-C591, C593-C602, C611-C622, C624-C633, C640-C651, C645-C656, C658-C667, C672-C683, C677-C688, C690-C699, C710-C723, C725-C734, C739-C749, C743-C754, C756-C765, C770-C780, C774-C785, C787-C796, C810-C820, C814-C829, and C831-C840. 3 N-linked (GlcNAc...) asparagine glycosylation sites follow: N925, N948, and N1267. NHL repeat units follow at residues 1272-1316 (LELR…VKSL), 1342-1386 (ARCG…NGII), 1401-1452 (LSCD…IAGR), 1474-1501 (LESA…INRL), and 1530-1573 (CYSG…VSKN). One copy of the YD 1 repeat lies at 1583–1602 (YEAASPGEQELYVFNADGIH). A glycan (N-linked (GlcNAc...) asparagine) is linked at N1616. YD repeat units follow at residues 1619–1639 (YSTD…LKIR), 1682–1701 (YDGN…WTTF), and 1702–1724 (YDYD…TSLH). N-linked (GlcNAc...) asparagine glycosylation is found at N1712, N1749, N1773, N1807, and N1892. YD repeat units lie at residues 1895 to 1914 (YFFN…ERTD), 1936 to 1954 (YLDK…YIFE), 1955 to 1975 (YDSS…HSMS), 1982 to 1999 (YIRN…VIFD), 2000 to 2021 (YSDD…VFYK), 2022 to 2039 (YGKL…TAVT), 2042 to 2062 (YDET…FSCT), 2065 to 2085 (YRKI…EGMV), 2093 to 2113 (YHDN…TPLP), 2119 to 2136 (YDEI…GVIY), 2137 to 2163 (YDIN…IKEV), 2165 to 2178 (YEMF…MTVQ), 2179 to 2202 (YDSM…TKYT), 2205 to 2225 (YDGD…WRYS), 2226 to 2246 (YDLN…LMPL), 2248 to 2268 (YDLR…DDDG), 2280 to 2300 (YNSK…SVQY), and 2302 to 2322 (YDGV…LQYF). The N-linked (GlcNAc...) asparagine glycan is linked to N1993. N2197 carries N-linked (GlcNAc...) asparagine glycosylation. N-linked (GlcNAc...) asparagine glycosylation is present at N2337. The YD 23 repeat unit spans residues 2348 to 2389 (YDLQGHLFAMESSSGEEYYVASDNTGTPLAVFSINGLMIKQL). Residue N2648 is glycosylated (N-linked (GlcNAc...) asparagine).

It belongs to the tenascin family. Teneurin subfamily. Homodimer; disulfide-linked. Heterodimer with either TENM1 or TENM3. May also form heterodimer with TENM4. Isoform 2 (C-terminal globular domain) interacts with ADGRL1 isoform 2. Derives from the membrane form by proteolytic processing. In terms of processing, derives from the plasma membrane form by proteolytic cleavage and translocates to the nucleus. Homophilic binding of the C-terminal extracellular domain stimulates its proteolytic cleavage and release in the cytoplasmic. Is subjected to rapid degradation by the proteasome pathway. In terms of tissue distribution, highly expressed in heart, followed by brain, liver, kidney and fetal brain and weakly expressed in lung and testis. No expression was detected in skeletal muscle, pancreas, spleen, ovary and fetal liver.

It is found in the cell membrane. The protein localises to the presynaptic cell membrane. Its subcellular location is the postsynaptic cell membrane. It localises to the endoplasmic reticulum. The protein resides in the golgi apparatus. It is found in the synapse. The protein localises to the cell projection. Its subcellular location is the dendritic spine. It localises to the filopodium. The protein resides in the growth cone. It is found in the nucleus. The protein localises to the PML body. Functionally, involved in neural development, regulating the establishment of proper connectivity within the nervous system. Acts as a ligand of the ADGRL1 and ADGRL3 receptors that are expressed at the surface of adjacent cells. Promotes the formation of filopodia and enlarged growth cone in neuronal cells. Mediates axon guidance and homophilic and heterophilic cell-cell adhesion. May function as a cellular signal transducer. In terms of biological role, acts as a ligand of the ADGRL1 receptor. Mediates axon guidance and heterophilic cell-cell adhesion. Induces gene transcription inhibition. The protein is Teneurin-2 (TENM2) of Homo sapiens (Human).